The chain runs to 215 residues: MADS-box transcription factor 4 (215 aa).

Residues 1–61 (MGRGKIEIKR…GKLSDYCTPK (61 aa)) form the MADS-box domain. One can recognise a K-box domain in the interval 89–175 (HKSLSAEIDR…AFRVHQQEVE (87 aa)).

May interact with the K-box of MADS16. In terms of tissue distribution, highly expressed in lodicules, at intermediate levels in stamens, and weakly in carpels. Expressed in pollen.

The protein resides in the nucleus. Functionally, probable transcription factor involved in the development of floral organs. B-class protein required for normal development of lodicules and stamens (whorls 2 and 3). May function as a heterodimer with MADS16. The protein is MADS-box transcription factor 4 (MADS4) of Oryza sativa subsp. japonica (Rice).